Consider the following 1203-residue polypeptide: DNA-directed RNA polymerase subunit beta' (1203 aa).

Positions 60, 62, 75, and 78 each coordinate Zn(2+). The Mg(2+) site is built by aspartate 449, aspartate 451, and aspartate 453. Zn(2+)-binding residues include cysteine 818, cysteine 892, cysteine 899, and cysteine 902.

Belongs to the RNA polymerase beta' chain family. In terms of assembly, the RNAP catalytic core consists of 2 alpha, 1 beta, 1 beta' and 1 omega subunit. When a sigma factor is associated with the core the holoenzyme is formed, which can initiate transcription. It depends on Mg(2+) as a cofactor. Zn(2+) is required as a cofactor.

It catalyses the reaction RNA(n) + a ribonucleoside 5'-triphosphate = RNA(n+1) + diphosphate. In terms of biological role, DNA-dependent RNA polymerase catalyzes the transcription of DNA into RNA using the four ribonucleoside triphosphates as substrates. The sequence is that of DNA-directed RNA polymerase subunit beta' from Bacillus cereus (strain ATCC 14579 / DSM 31 / CCUG 7414 / JCM 2152 / NBRC 15305 / NCIMB 9373 / NCTC 2599 / NRRL B-3711).